The chain runs to 482 residues: Bactericidal permeability-increasing protein (482 aa).

An N-terminal signal peptide occupies residues 1 to 26 (MARGPDTARRWATLVVLAALSTAVTT). The segment at 27-36 (TNPGIVARIT) is central sheet, part 1. The tract at residues 36–219 (TQKGLDYACQ…SKLQPYFQTL (184 aa)) is N-terminal barrel. N-linked (GlcNAc...) asparagine glycosylation is present at Asn62. Residues Cys161 and Cys201 are joined by a disulfide bond. The interval 221–285 (VTTKLDKVAG…HDRMVYLGIS (65 aa)) is central sheet, part 2. Positions 235-240 (LVAPPR) are cleavage sites for elastase. A C-terminal barrel region spans residues 286-456 (EYFFNTAGFV…LQKGFPLPLP (171 aa)). Residues Asn303, Asn375, Asn389, and Asn463 are each glycosylated (N-linked (GlcNAc...) asparagine). A central sheet, part 3 region spans residues 463-482 (NLTLQPYQDFLLFGADVHYS).

It belongs to the BPI/LBP/Plunc superfamily. BPI/LBP family. In terms of assembly, monomer. Homodimer; disulfide-linked. Restricted to cells of the myeloid series.

The protein resides in the secreted. It localises to the cytoplasmic granule membrane. In terms of biological role, the cytotoxic action of BPI is limited to many species of Gram-negative bacteria; this specificity may be explained by a strong affinity of the very basic N-terminal half for the negatively charged lipopolysaccharides that are unique to the Gram-negative bacterial outer envelope. This is Bactericidal permeability-increasing protein (BPI) from Bos taurus (Bovine).